Consider the following 428-residue polypeptide: Flotillin-2 (428 aa).

A lipid anchor (N-myristoyl glycine) is attached at Gly2. Residue Cys4 is the site of S-palmitoyl cysteine; by ZDHHC5 attachment. Cys19 is lipidated: S-palmitoyl cysteine. Cys20 carries the S-palmitoyl cysteine; by ZDHHC5 lipid modification. Ser405 bears the Phosphoserine mark.

Belongs to the band 7/mec-2 family. Flotillin subfamily. In terms of assembly, heterooligomeric complex of flotillin-1 and flotillin-2 and caveolin-1 and caveolin-2. Interacts with ECPAS. ZDHHC5-catalyzed palmitoylation predominantly occurs at Cys-4. ZDHHC5-catalyzed palmitoylation may be required for the formation of higher-order complexes and for neurite outgrowth in cultured neural stem cells. In skin, expressed in epidermis and epidermal appendages but not in dermis. Expressed in all layers of the epidermis except the basal layer. In hair follicles, expressed in the suprabasal layer but not the basal layer. Also expressed in melanoma and carcinoma cell lines, fibroblasts and foreskin melanocytes.

It is found in the cell membrane. The protein localises to the membrane. The protein resides in the caveola. It localises to the endosome. Functionally, may act as a scaffolding protein within caveolar membranes, functionally participating in formation of caveolae or caveolae-like vesicles. May be involved in epidermal cell adhesion and epidermal structure and function. The chain is Flotillin-2 (FLOT2) from Homo sapiens (Human).